The sequence spans 492 residues: Heat shock factor protein 4 (492 aa).

A DNA-binding region spans residues valine 17 to valine 121. A hydrophobic repeat HR-A/B region spans residues glycine 129–alanine 203. The tract at residues leucine 245–proline 322 is interactions with DUSP26, MAPK1 and MAPK2. The segment at proline 246–arginine 285 is disordered. Lysine 293 participates in a covalent cross-link: Glycyl lysine isopeptide (Lys-Gly) (interchain with G-Cter in SUMO). Serine 298 carries the phosphoserine modification. A disordered region spans residues glycine 337 to proline 400. The hydrophobic repeat HR-C stretch occupies residues leucine 364–valine 389. Residues glutamate 374–serine 388 are compositionally biased toward low complexity.

The protein belongs to the HSF family. Homotrimer. Exhibits constitutive DNA binding and forms trimers even in the absence of stress. Interacts with ALKBH4, DUSP26, MAPK1, MAPK2, MAPK8 and MAP kinase p38. Phosphorylated mainly on serine residues. Phosphorylation on Ser-298 promotes sumoylation on Lys-293. Post-translationally, isoform HSF4B is constitutively sumoylated. Sumoylation represses the transcriptional activity and is promoted by phosphorylation on Ser-298. HSFA is not sumoylated. Expressed in heart, skeletal muscle, eye and brain, and at much lower levels in some other tissues.

Its subcellular location is the nucleus. Functionally, heat-shock transcription factor that specifically binds heat shock promoter elements (HSE). Required for denucleation and organelle rupture and degradation that occur during eye lens terminal differentiation, when fiber cells that compose the lens degrade all membrane-bound organelles in order to provide lens with transparency to allow the passage of light. In this process, may regulate denucleation of lens fiber cells in part by activating DNASE2B transcription. May be involved in DNA repair through the transcriptional regulation of RAD51. May up-regulate p53/TP53 protein in eye lens fiber cells, possibly through protein stabilization. In the eye lens, controls the expression of alpha-crystallin B chain/CRYAB and consequently may be involved in the regulation of lysosomal acidification. Transcriptional repressor. In terms of biological role, transcriptional activator. The protein is Heat shock factor protein 4 (HSF4) of Homo sapiens (Human).